We begin with the raw amino-acid sequence, 178 residues long: PRA1 family protein 2 (178 aa).

The Cytoplasmic portion of the chain corresponds to 1 to 41 (MSEVRLPPLRALDDFVLGSARLAAPDPCDPQRWCHRVINNL). The chain crosses the membrane as a helical span at residues 42–62 (LYYQTNYLLCFGIGLALAGYV). Residues 63–64 (RP) are Extracellular-facing. A helical membrane pass occupies residues 65-85 (LHTLLSALVVAVALGVLVWAA). The Cytoplasmic segment spans residues 86–96 (ETRAAVRRCRR). Residues 97-119 (SHPAACLAAVLAVGLLVLWVAGG) traverse the membrane as a helical segment. Over 120 to 122 (ACT) the chain is Extracellular. A helical membrane pass occupies residues 123-140 (FLFSIAGPVLLILVHASL). At 141 to 178 (RLRNLKNKIENKIESIGLKRTPMGLLLEALGQEQEAGS) the chain is on the cytoplasmic side.

This sequence belongs to the PRA1 family. In terms of assembly, interacts with CCR5 and GDE1. As to expression, strong expression in the brain, small intestine, lung, spleen, and pancreas as well as in tumor tissues of the breast, colon, lung and ovary, with a weaker expression in normal tissues of the same patient. High expression in neuroblastic tumors. Strongly expressed in Purkinje cells and more moderately in cells of the molecular and the granular layers in the cerebellum. Detected in neuronal cells, but not in non-neuronal cells in the cerebral cortex, hippocampus, and lateral ventricles.

The protein localises to the endosome membrane. In terms of biological role, may be involved in ER/Golgi transport and vesicular traffic. Plays a proapoptotic role in cerulenin-induced neuroblastoma apoptosis. This chain is PRA1 family protein 2 (PRAF2), found in Homo sapiens (Human).